We begin with the raw amino-acid sequence, 172 residues long: Dual-action ribosomal maturation protein DarP (172 aa).

The protein belongs to the DarP family.

It localises to the cytoplasm. Its function is as follows. Member of a network of 50S ribosomal subunit biogenesis factors which assembles along the 30S-50S interface, preventing incorrect 23S rRNA structures from forming. Promotes peptidyl transferase center (PTC) maturation. The protein is Dual-action ribosomal maturation protein DarP of Ectopseudomonas mendocina (strain ymp) (Pseudomonas mendocina).